Here is a 424-residue protein sequence, read N- to C-terminus: Adenylosuccinate synthetase (424 aa).

GTP contacts are provided by residues 11-17 and 39-41; these read GDEGKGK and GHT. The active-site Proton acceptor is the Asp12. Mg(2+) is bound by residues Asp12 and Gly39. IMP contacts are provided by residues 12–15, 37–40, Thr127, Arg141, Gln223, Thr238, and Arg302; these read DEGK and NAGH. His40 serves as the catalytic Proton donor. 298–304 provides a ligand contact to substrate; it reads TTTGRGR. GTP contacts are provided by residues Arg304, 330-332, and 412-414; these read KLD and SVG.

The protein belongs to the adenylosuccinate synthetase family. Homodimer. Mg(2+) serves as cofactor.

It is found in the cytoplasm. It carries out the reaction IMP + L-aspartate + GTP = N(6)-(1,2-dicarboxyethyl)-AMP + GDP + phosphate + 2 H(+). It functions in the pathway purine metabolism; AMP biosynthesis via de novo pathway; AMP from IMP: step 1/2. Plays an important role in the de novo pathway of purine nucleotide biosynthesis. Catalyzes the first committed step in the biosynthesis of AMP from IMP. The polypeptide is Adenylosuccinate synthetase (Methanosarcina barkeri (strain Fusaro / DSM 804)).